An 85-amino-acid chain; its full sequence is Small ribosomal subunit protein bS16 (85 aa).

Belongs to the bacterial ribosomal protein bS16 family.

This Clostridium kluyveri (strain NBRC 12016) protein is Small ribosomal subunit protein bS16.